We begin with the raw amino-acid sequence, 48 residues long: Large ribosomal subunit protein eL40 (48 aa).

It belongs to the eukaryotic ribosomal protein eL40 family.

The protein is Large ribosomal subunit protein eL40 of Methanocella arvoryzae (strain DSM 22066 / NBRC 105507 / MRE50).